The primary structure comprises 188 residues: Large ribosomal subunit protein uL5 (188 aa).

This sequence belongs to the universal ribosomal protein uL5 family. As to quaternary structure, part of the 50S ribosomal subunit; contacts the 5S rRNA and probably tRNA. Forms a bridge to the 30S subunit in the 70S ribosome.

This is one of the proteins that bind and probably mediate the attachment of the 5S RNA into the large ribosomal subunit, where it forms part of the central protuberance. In the 70S ribosome it contacts protein S13 of the 30S subunit (bridge B1b), connecting the 2 subunits; this bridge is implicated in subunit movement. May contact the P site tRNA; the 5S rRNA and some of its associated proteins might help stabilize positioning of ribosome-bound tRNAs. The chain is Large ribosomal subunit protein uL5 from Pyrococcus horikoshii (strain ATCC 700860 / DSM 12428 / JCM 9974 / NBRC 100139 / OT-3).